Here is a 558-residue protein sequence, read N- to C-terminus: Solute carrier family 22 member 6-A (558 aa).

The Cytoplasmic segment spans residues 1–15 (MSFAELLERTGGMGR). A helical membrane pass occupies residues 16–36 (FQITQVALMCFPILLMASHNL). Residues 37–140 (LQNFSAAIPD…LVCGHKNRRQ (104 aa)) lie on the Extracellular side of the membrane. A helical membrane pass occupies residues 141–161 (LAQSVYMGGVLVGAIILGGLS). The Cytoplasmic portion of the chain corresponds to 162-167 (DRYGRR). Residues 168-188 (ALLIWSYFQMAVSGLCSAFSP) form a helical membrane-spanning segment. Residues 189–197 (NYLSYCIFR) lie on the Extracellular side of the membrane. The helical transmembrane segment at 198–218 (FLTGMALSGIGLNTTALIVEW) threads the bilayer. Residues 219-225 (VPTRVRT) are Cytoplasmic-facing. A helical membrane pass occupies residues 226 to 246 (ITGTLAGFSYTVGQLLLAGLA). Residues 247–253 (YAMRDWR) lie on the Extracellular side of the membrane. Residues 254–274 (WLQLCVSLPFFIFFLYSWWFP) form a helical membrane-spanning segment. At 275–342 (ESARWLVLSG…DLIRTSTIRR (68 aa)) the chain is on the cytoplasmic side. Residues 343 to 363 (ISCALSLVWFSTSFAYYGLAM) form a helical membrane-spanning segment. Topologically, residues 364-369 (DLQNFN) are extracellular. The helical transmembrane segment at 370 to 390 (VSIYLIQVIFGAVDFPAKIFS) threads the bilayer. The Cytoplasmic segment spans residues 391-400 (TTAMIYVGRK). The chain crosses the membrane as a helical span at residues 401-421 (FTQLMSLILGGVVILANSFVP). Residues 422–428 (HEMQTVR) are Extracellular-facing. The helical transmembrane segment at 429–449 (TGMAVFGKGCLAASFSCVFLY) threads the bilayer. Residues 450-462 (TTELYPTVIRQSG) lie on the Cytoplasmic side of the membrane. Residues 463 to 483 (LGLCSTMARIGGIVAPLVKIL) traverse the membrane as a helical segment. Topologically, residues 484 to 488 (GEYYP) are extracellular. Residues 489 to 509 (FLPLVIYGGAPIISGLCVFFL) traverse the membrane as a helical segment. Residues 510-558 (PETVNKPLPDTIEEVEKRIKAPKKENEMNEIVSLKKKEGMKENPVNDVL) lie on the Cytoplasmic side of the membrane. Residues 539–550 (EIVSLKKKEGMK) show a composition bias toward basic and acidic residues. The tract at residues 539 to 558 (EIVSLKKKEGMKENPVNDVL) is disordered.

It belongs to the major facilitator (TC 2.A.1) superfamily. Organic cation transporter (TC 2.A.1.19) family. In terms of processing, glycosylated. Glycosylation is necessary for proper targeting of the transporter to the plasma membrane.

It is found in the cell membrane. It localises to the basolateral cell membrane. The protein resides in the basal cell membrane. Functionally, involved in the renal elimination of endogenous and exogenous organic anions. Mediates the sodium-independent uptake of p-aminohippurate (PAH), 2,3-dimercapto-1-propanesulfonic acid (DMPS), cidofovir, adefovir, 9-(2-phosphonylmethoxyethyl) guanine (PMEG), 9-(2-phosphonylmethoxyethyl) diaminopurine (PMEDAP), ochratoxin (OTA), acyclovir (ACV), 3'-azido-3-'deoxythymidine (AZT), cimetidine (CMD), 2,4-dichloro-phenoxyacetate (2,4-D), hippurate (HA), indoleacetate (IA), indoxyl sulfate (IS) and 3-carboxy-4-methyl-5-propyl-2-furanpropionate (CMPF) and edaravone sulfate. PAH uptake is inhibited by p-chloromercuribenzenesulphonate (PCMBS), diethyl pyrocarbonate (DEPC), indomethacin, sulindac, diclofenac, carprofen, okadaic acid, benzothiazolylcysteine (BTC), S-chlorotrifluoroethylcysteine (CTFC), cysteine S-conjugates S-dichlorovinylcysteine (DCVC), furosemide, steviol, phorbol 12-myristate 13-acetate (PMA), calcium ionophore A23187, benzylpenicillin, bumetamide, losartan, probenecid, phenol red, urate, glutarate and alpha-ketoglutarate. In Xenopus laevis (African clawed frog), this protein is Solute carrier family 22 member 6-A (slc22a6-a).